A 107-amino-acid chain; its full sequence is Phosphoribosyl-ATP pyrophosphatase (107 aa).

Belongs to the PRA-PH family.

Its subcellular location is the cytoplasm. The catalysed reaction is 1-(5-phospho-beta-D-ribosyl)-ATP + H2O = 1-(5-phospho-beta-D-ribosyl)-5'-AMP + diphosphate + H(+). It participates in amino-acid biosynthesis; L-histidine biosynthesis; L-histidine from 5-phospho-alpha-D-ribose 1-diphosphate: step 2/9. In Rhizobium johnstonii (strain DSM 114642 / LMG 32736 / 3841) (Rhizobium leguminosarum bv. viciae), this protein is Phosphoribosyl-ATP pyrophosphatase.